The chain runs to 26 residues: Mucus envelope protein (26 aa).

Post-translationally, glycosylated. As to expression, produced by the opercular gland in the gill cavity and secreted as part of the mucus cocoon.

It is found in the secreted. In terms of biological role, exhibits antibacterial activity. May play a role in protection against parasite settlement. This chain is Mucus envelope protein, found in Scarus vetula (Queen parrotfish).